A 175-amino-acid chain; its full sequence is RNA pyrophosphohydrolase (175 aa).

The Nudix hydrolase domain occupies 6 to 149; sequence GYRPNVGIVI…KRDVYRRVMK (144 aa). The short motif at 38–59 is the Nudix box element; it reads GGINPGETAEQAMYRELFEEVG.

The protein belongs to the Nudix hydrolase family. RppH subfamily. A divalent metal cation is required as a cofactor.

Its function is as follows. Accelerates the degradation of transcripts by removing pyrophosphate from the 5'-end of triphosphorylated RNA, leading to a more labile monophosphorylated state that can stimulate subsequent ribonuclease cleavage. This Serratia proteamaculans (strain 568) protein is RNA pyrophosphohydrolase.